A 702-amino-acid polypeptide reads, in one-letter code: Dynein axonemal intermediate chain 1 (702 aa).

The interval 1–58 (MLPASSKMPHKQPPPPRKQSISMGRGARKRDEDSGTEVGEGTDEWVQSKATVKPPDQL) is disordered. 2 positions are modified to phosphoserine: S134 and S137. 5 WD repeats span residues 383–423 (SSES…SQPS), 432–475 (KHTD…LVHT), 540–580 (AHNM…PMFI), 582–622 (DLNS…YEAI), and 630–669 (KKKN…RKMP).

Belongs to the dynein intermediate chain family. As to quaternary structure, consists of at least two heavy chains and a number of intermediate and light chains. Interacts with BICD2. Interacts with CFAP45 and CFAP52. Interacts with CFAP53.

Its subcellular location is the cytoplasm. The protein resides in the cytoskeleton. The protein localises to the cilium axoneme. Part of the dynein complex of respiratory cilia. The polypeptide is Dynein axonemal intermediate chain 1 (DNAI1) (Bos taurus (Bovine)).